A 31-amino-acid polypeptide reads, in one-letter code: METNILALMATALFIIIPTAFLIILYAQTNK.

Residues 5–25 (ILALMATALFIIIPTAFLIIL) form a helical membrane-spanning segment.

It belongs to the PsbM family. As to quaternary structure, PSII is composed of 1 copy each of membrane proteins PsbA, PsbB, PsbC, PsbD, PsbE, PsbF, PsbH, PsbI, PsbJ, PsbK, PsbL, PsbM, PsbT, PsbX, PsbY, PsbZ, Psb30/Ycf12, at least 3 peripheral proteins of the oxygen-evolving complex and a large number of cofactors. It forms dimeric complexes.

Its subcellular location is the plastid. It is found in the chloroplast thylakoid membrane. One of the components of the core complex of photosystem II (PSII). PSII is a light-driven water:plastoquinone oxidoreductase that uses light energy to abstract electrons from H(2)O, generating O(2) and a proton gradient subsequently used for ATP formation. It consists of a core antenna complex that captures photons, and an electron transfer chain that converts photonic excitation into a charge separation. This subunit is found at the monomer-monomer interface. This is Photosystem II reaction center protein M from Mesostigma viride (Green alga).